Consider the following 561-residue polypeptide: Arginine--tRNA ligase (561 aa).

Positions 129-139 (ANPTGPLHVGH) match the 'HIGH' region motif.

It belongs to the class-I aminoacyl-tRNA synthetase family. Monomer.

Its subcellular location is the cytoplasm. The catalysed reaction is tRNA(Arg) + L-arginine + ATP = L-arginyl-tRNA(Arg) + AMP + diphosphate. The polypeptide is Arginine--tRNA ligase (Polaromonas sp. (strain JS666 / ATCC BAA-500)).